A 34-amino-acid polypeptide reads, in one-letter code: Potassium channel toxin alpha-KTx 18.2 (34 aa).

Disulfide bonds link cysteine 7/cysteine 26, cysteine 12/cysteine 31, and cysteine 16/cysteine 33.

In terms of tissue distribution, expressed by the venom gland.

The protein resides in the secreted. Its function is as follows. Reversibly blocks Shaker B potassium channels. This is Potassium channel toxin alpha-KTx 18.2 from Tityus discrepans (Venezuelan scorpion).